The chain runs to 257 residues: UPF0246 protein Rsph17029_0026 (257 aa).

This sequence belongs to the UPF0246 family.

The chain is UPF0246 protein Rsph17029_0026 from Cereibacter sphaeroides (strain ATCC 17029 / ATH 2.4.9) (Rhodobacter sphaeroides).